We begin with the raw amino-acid sequence, 426 residues long: Tol-Pal system protein TolB (426 aa).

An N-terminal signal peptide occupies residues 1-25; that stretch reads MNILLSRFRLLLAAALAALSWGAQA.

Belongs to the TolB family. In terms of assembly, the Tol-Pal system is composed of five core proteins: the inner membrane proteins TolA, TolQ and TolR, the periplasmic protein TolB and the outer membrane protein Pal. They form a network linking the inner and outer membranes and the peptidoglycan layer.

Its subcellular location is the periplasm. In terms of biological role, part of the Tol-Pal system, which plays a role in outer membrane invagination during cell division and is important for maintaining outer membrane integrity. The polypeptide is Tol-Pal system protein TolB (Aromatoleum aromaticum (strain DSM 19018 / LMG 30748 / EbN1) (Azoarcus sp. (strain EbN1))).